The primary structure comprises 570 residues: Sulfite reductase [NADPH] hemoprotein beta-component (570 aa).

4 residues coordinate [4Fe-4S] cluster: C434, C440, C479, and C483. C483 contributes to the siroheme binding site.

Belongs to the nitrite and sulfite reductase 4Fe-4S domain family. Alpha(8)-beta(8). The alpha component is a flavoprotein, the beta component is a hemoprotein. Siroheme serves as cofactor. It depends on [4Fe-4S] cluster as a cofactor.

It catalyses the reaction hydrogen sulfide + 3 NADP(+) + 3 H2O = sulfite + 3 NADPH + 4 H(+). It participates in sulfur metabolism; hydrogen sulfide biosynthesis; hydrogen sulfide from sulfite (NADPH route): step 1/1. Component of the sulfite reductase complex that catalyzes the 6-electron reduction of sulfite to sulfide. This is one of several activities required for the biosynthesis of L-cysteine from sulfate. The chain is Sulfite reductase [NADPH] hemoprotein beta-component from Escherichia coli (strain SMS-3-5 / SECEC).